A 151-amino-acid chain; its full sequence is Small ribosomal subunit protein uS13 (151 aa).

It belongs to the universal ribosomal protein uS13 family. Part of the 30S ribosomal subunit. Forms a loose heterodimer with protein S19. Forms two bridges to the 50S subunit in the 70S ribosome.

Functionally, located at the top of the head of the 30S subunit, it contacts several helices of the 16S rRNA. In the 70S ribosome it contacts the 23S rRNA (bridge B1a) and protein L5 of the 50S subunit (bridge B1b), connecting the 2 subunits; these bridges are implicated in subunit movement. The protein is Small ribosomal subunit protein uS13 of Staphylothermus marinus (strain ATCC 43588 / DSM 3639 / JCM 9404 / F1).